Consider the following 515-residue polypeptide: Histidine ammonia-lyase (515 aa).

The segment at residues 145–147 (ASG) is a cross-link (5-imidazolinone (Ala-Gly)). Ser-146 carries the post-translational modification 2,3-didehydroalanine (Ser).

This sequence belongs to the PAL/histidase family. Post-translationally, contains an active site 4-methylidene-imidazol-5-one (MIO), which is formed autocatalytically by cyclization and dehydration of residues Ala-Ser-Gly.

Its subcellular location is the cytoplasm. The catalysed reaction is L-histidine = trans-urocanate + NH4(+). The protein operates within amino-acid degradation; L-histidine degradation into L-glutamate; N-formimidoyl-L-glutamate from L-histidine: step 1/3. This Gluconacetobacter diazotrophicus (strain ATCC 49037 / DSM 5601 / CCUG 37298 / CIP 103539 / LMG 7603 / PAl5) protein is Histidine ammonia-lyase.